The following is a 390-amino-acid chain: NADH-quinone oxidoreductase subunit D (390 aa).

The protein belongs to the complex I 49 kDa subunit family. NDH-1 is composed of 14 different subunits. Subunits NuoB, C, D, E, F, and G constitute the peripheral sector of the complex.

It localises to the cell membrane. The catalysed reaction is a quinone + NADH + 5 H(+)(in) = a quinol + NAD(+) + 4 H(+)(out). NDH-1 shuttles electrons from NADH, via FMN and iron-sulfur (Fe-S) centers, to quinones in the respiratory chain. The immediate electron acceptor for the enzyme in this species is believed to be ubiquinone. Couples the redox reaction to proton translocation (for every two electrons transferred, four hydrogen ions are translocated across the cytoplasmic membrane), and thus conserves the redox energy in a proton gradient. The sequence is that of NADH-quinone oxidoreductase subunit D from Wolbachia pipientis wMel.